The chain runs to 396 residues: D-alanine--D-alanine ligase (396 aa).

The 207-residue stretch at 141–347 (KMLWQAAGLP…PQDLMAQLLS (207 aa)) folds into the ATP-grasp domain. 174 to 229 (ETRLGYPLFVKPAQAGSSVGASAVQTRAPLIPAIEAAFQWDEVVLVERYVRAREIE) lines the ATP pocket. Residues aspartate 301, glutamate 314, and asparagine 316 each contribute to the Mg(2+) site. The interval 374–396 (AAHDPDAQGDDWDQRDSNPLPTA) is disordered.

Belongs to the D-alanine--D-alanine ligase family. It depends on Mg(2+) as a cofactor. The cofactor is Mn(2+).

Its subcellular location is the cytoplasm. The enzyme catalyses 2 D-alanine + ATP = D-alanyl-D-alanine + ADP + phosphate + H(+). It functions in the pathway cell wall biogenesis; peptidoglycan biosynthesis. In terms of biological role, cell wall formation. In Treponema pallidum (strain Nichols), this protein is D-alanine--D-alanine ligase.